Consider the following 202-residue polypeptide: Methylthioribulose-1-phosphate dehydratase (202 aa).

Zn(2+)-binding residues include His-93 and His-95.

The protein belongs to the aldolase class II family. MtnB subfamily. Requires Zn(2+) as cofactor.

The catalysed reaction is 5-(methylsulfanyl)-D-ribulose 1-phosphate = 5-methylsulfanyl-2,3-dioxopentyl phosphate + H2O. It functions in the pathway amino-acid biosynthesis; L-methionine biosynthesis via salvage pathway; L-methionine from S-methyl-5-thio-alpha-D-ribose 1-phosphate: step 2/6. In terms of biological role, catalyzes the dehydration of methylthioribulose-1-phosphate (MTRu-1-P) into 2,3-diketo-5-methylthiopentyl-1-phosphate (DK-MTP-1-P). The protein is Methylthioribulose-1-phosphate dehydratase of Klebsiella pneumoniae subsp. pneumoniae (strain ATCC 700721 / MGH 78578).